The following is a 271-amino-acid chain: Orotidine 5'-phosphate decarboxylase (271 aa).

Lys95 serves as the catalytic Proton donor.

It belongs to the OMP decarboxylase family. Type 2 subfamily.

It carries out the reaction orotidine 5'-phosphate + H(+) = UMP + CO2. It functions in the pathway pyrimidine metabolism; UMP biosynthesis via de novo pathway; UMP from orotate: step 2/2. This Janthinobacterium sp. (strain Marseille) (Minibacterium massiliensis) protein is Orotidine 5'-phosphate decarboxylase.